Here is a 163-residue protein sequence, read N- to C-terminus: ATP synthase subunit b 1 (163 aa).

The helical transmembrane segment at 7-27 (AETWVAVAFVILMALFAYLGV) threads the bilayer.

It belongs to the ATPase B chain family. As to quaternary structure, F-type ATPases have 2 components, F(1) - the catalytic core - and F(0) - the membrane proton channel. F(1) has five subunits: alpha(3), beta(3), gamma(1), delta(1), epsilon(1). F(0) has three main subunits: a(1), b(2) and c(10-14). The alpha and beta chains form an alternating ring which encloses part of the gamma chain. F(1) is attached to F(0) by a central stalk formed by the gamma and epsilon chains, while a peripheral stalk is formed by the delta and b chains.

It localises to the cell inner membrane. Its function is as follows. F(1)F(0) ATP synthase produces ATP from ADP in the presence of a proton or sodium gradient. F-type ATPases consist of two structural domains, F(1) containing the extramembraneous catalytic core and F(0) containing the membrane proton channel, linked together by a central stalk and a peripheral stalk. During catalysis, ATP synthesis in the catalytic domain of F(1) is coupled via a rotary mechanism of the central stalk subunits to proton translocation. Functionally, component of the F(0) channel, it forms part of the peripheral stalk, linking F(1) to F(0). The sequence is that of ATP synthase subunit b 1 from Rhodopseudomonas palustris (strain BisB5).